Here is an 80-residue protein sequence, read N- to C-terminus: Beta-toxin KAaH2 (80 aa).

The first 22 residues, 1 to 22, serve as a signal peptide directing secretion; it reads MMKLMLFSIIVILFSLIGSIHG. The region spanning 25–80 is the LCN-type CS-alpha/beta domain; the sequence is VPGNYPLDSSDDTYLCAPLGENPSCIQICRKHGVKYGYCYAFQCWCEYLEDKNVKI. 3 cysteine pairs are disulfide-bonded: C40-C63, C49-C68, and C53-C70.

The protein belongs to the long (3 C-C) scorpion toxin superfamily. Sodium/Potassium channel inhibitor family. Expressed by the venom gland.

It localises to the secreted. Its function is as follows. Weakly inhibits the vertebrate potassium channel Kv1.1/KCNA1. The protein is Beta-toxin KAaH2 of Androctonus australis (Sahara scorpion).